We begin with the raw amino-acid sequence, 426 residues long: Gamma-glutamyl phosphate reductase (426 aa).

The protein belongs to the gamma-glutamyl phosphate reductase family.

It localises to the cytoplasm. It carries out the reaction L-glutamate 5-semialdehyde + phosphate + NADP(+) = L-glutamyl 5-phosphate + NADPH + H(+). The protein operates within amino-acid biosynthesis; L-proline biosynthesis; L-glutamate 5-semialdehyde from L-glutamate: step 2/2. In terms of biological role, catalyzes the NADPH-dependent reduction of L-glutamate 5-phosphate into L-glutamate 5-semialdehyde and phosphate. The product spontaneously undergoes cyclization to form 1-pyrroline-5-carboxylate. The chain is Gamma-glutamyl phosphate reductase from Acidovorax ebreus (strain TPSY) (Diaphorobacter sp. (strain TPSY)).